The primary structure comprises 625 residues: Sorting nexin-41 (625 aa).

The interval 1–90 (MDYNIFEAVH…STSSHAVVEA (90 aa)) is disordered. Over residues 54–86 (SPPSSSSLPSSPAHSSSAGSSRASTSSSTSSHA) the composition is skewed to low complexity. The 138-residue stretch at 98-235 (VSLSMSTTAT…QKFLNPEFNW (138 aa)) folds into the PX domain. Residues R153, S155, K179, and R202 each contribute to the a 1,2-diacyl-sn-glycero-3-phospho-(1D-myo-inositol-3-phosphate) site. Coiled-coil stretches lie at residues 437–469 (QFKI…NESL) and 539–563 (QLTE…KDCL).

The protein belongs to the sorting nexin family. As to quaternary structure, binds to SNX4.

The protein resides in the prevacuolar compartment. The protein localises to the endosome. It is found in the endosome membrane. Involved in proper sorting of the v-SNARE protein SNC1. This chain is Sorting nexin-41 (SNX41), found in Saccharomyces cerevisiae (strain ATCC 204508 / S288c) (Baker's yeast).